The chain runs to 116 residues: Large ribosomal subunit protein bL17 (116 aa).

This sequence belongs to the bacterial ribosomal protein bL17 family. In terms of assembly, part of the 50S ribosomal subunit. Contacts protein L32.

In Prochlorococcus marinus (strain MIT 9301), this protein is Large ribosomal subunit protein bL17.